A 358-amino-acid chain; its full sequence is Src kinase-associated phosphoprotein 2 (358 aa).

Phosphoserine occurs at positions 5 and 9. Residues 14 to 64 form a homodimerization region; that stretch reads PEEIRNLLADVETFVADTLKGENLSKKAKEKRESLIKKIKDVKSVYLQEFQ. Y75 bears the Phosphotyrosine mark. Residues S87 and S90 each carry the phosphoserine modification. Positions 116 to 219 constitute a PH domain; that stretch reads FVIKAGYLEK…WVQQLKFILQ (104 aa). Residues Y151 and Y197 each carry the phosphotyrosine modification. S223 carries the post-translational modification Phosphoserine. A disordered region spans residues 232 to 292; sequence ERGELYDDVD…RDSVHHTSGD (61 aa). A compositionally biased stretch (acidic residues) spans 255–270; it reads IDDEIYEELPEEEEDT. At Y260 the chain carries Phosphotyrosine; by FYN. Phosphoserine is present on residues S272, S282, and S285. Over residues 274–292 the composition is skewed to basic and acidic residues; it reads KMDEQGKGSRDSVHHTSGD. The SH3 domain maps to 296-357; it reads DYANFYQGLW…PKAYLMEMYD (62 aa).

This sequence belongs to the SKAP family. Interacts with LAT, GRB2, PTK2B and PRAM1. Homodimer. Interacts with FYB1, which is required for SKAP2 protein stability. Interacts with PTPNS1. Part of a complex consisting of SKAP2, FYB1 and PTPNS1. Part of a complex consisting of SKAP2, FYB1 and PIRB. May interact with actin. May interact with FYN, HCK and LYN. Interacts with FASLG. Dephosphorylated on Tyr-75 by PTPN22. Phosphorylated by FYN on Tyr-260. In case of infection with Y.pseudotuberculosis, dephosphorylated by bacterial phosphatase yopH. Expressed in kidney, lung, liver, spleen, bone marrow and testis. Present in T-cells, B-cells, and all cells of the myelomonocytic lineage. Present in all brain regions, with highest levels in neurons from the Purkinje cell layer, hippocampal gyrus, cortex and substantia nigra (at protein level).

It localises to the cytoplasm. Functionally, may be involved in B-cell and macrophage adhesion processes. In B-cells, may act by coupling the B-cell receptor (BCR) to integrin activation. May play a role in src signaling pathway. This is Src kinase-associated phosphoprotein 2 (Skap2) from Mus musculus (Mouse).